Consider the following 83-residue polypeptide: Small ribosomal subunit protein bS18 (83 aa).

The protein belongs to the bacterial ribosomal protein bS18 family. As to quaternary structure, part of the 30S ribosomal subunit. Forms a tight heterodimer with protein bS6.

Its function is as follows. Binds as a heterodimer with protein bS6 to the central domain of the 16S rRNA, where it helps stabilize the platform of the 30S subunit. The protein is Small ribosomal subunit protein bS18 of Methylobacterium radiotolerans (strain ATCC 27329 / DSM 1819 / JCM 2831 / NBRC 15690 / NCIMB 10815 / 0-1).